The sequence spans 536 residues: Glycine--tRNA ligase (536 aa).

Residues 56 to 67 (LVSPAGAPSTFE) form an insert region. Substrate is bound by residues R106 and E213. Residues 245-247 (RNE), 255-260 (FRSREF), and 333-334 (EL) contribute to the ATP site. 260–264 (FEQME) contacts substrate. Residues 350-372 (EGKLDPATNPMTVELNEHGKPKH) form an insert region. 396 to 400 (EPSAG) is a binding site for substrate. Residue 400 to 403 (GADR) participates in ATP binding.

The protein belongs to the class-II aminoacyl-tRNA synthetase family. Homodimer.

It is found in the cytoplasm. It catalyses the reaction tRNA(Gly) + glycine + ATP = glycyl-tRNA(Gly) + AMP + diphosphate. Catalyzes the attachment of glycine to tRNA(Gly). The protein is Glycine--tRNA ligase of Rhodopirellula baltica (strain DSM 10527 / NCIMB 13988 / SH1).